Here is an 824-residue protein sequence, read N- to C-terminus: LPS-assembly protein LptD (824 aa).

Disordered regions lie at residues 1–26 (MTEQ…RRVR) and 67–117 (TQTP…PAYV). Residues 1-48 (MTEQRRSPHHPATRPPAPPGTSRRVRLPASALRPLVLAMAGLTVSAHA) form the signal peptide. Over residues 98-115 (NTLNLSPSSTPSNPNAPA) the composition is skewed to low complexity.

It belongs to the LptD family. In terms of assembly, component of the lipopolysaccharide transport and assembly complex. Interacts with LptE and LptA.

Its subcellular location is the cell outer membrane. Its function is as follows. Together with LptE, is involved in the assembly of lipopolysaccharide (LPS) at the surface of the outer membrane. In Cupriavidus metallidurans (strain ATCC 43123 / DSM 2839 / NBRC 102507 / CH34) (Ralstonia metallidurans), this protein is LPS-assembly protein LptD.